The chain runs to 83 residues: MPVIESAIQRVRLTKKQHDRNEPQLSAYRTAVKKFEKAAAAGTDNLAELYKAASSAIDHAYSKGLIKKNKASREKSRLAKYVK.

It belongs to the bacterial ribosomal protein bS20 family.

Its function is as follows. Binds directly to 16S ribosomal RNA. This is Small ribosomal subunit protein bS20 from Leuconostoc mesenteroides subsp. mesenteroides (strain ATCC 8293 / DSM 20343 / BCRC 11652 / CCM 1803 / JCM 6124 / NCDO 523 / NBRC 100496 / NCIMB 8023 / NCTC 12954 / NRRL B-1118 / 37Y).